A 415-amino-acid chain; its full sequence is Gamma-glutamyl phosphate reductase (415 aa).

It belongs to the gamma-glutamyl phosphate reductase family.

It localises to the cytoplasm. The enzyme catalyses L-glutamate 5-semialdehyde + phosphate + NADP(+) = L-glutamyl 5-phosphate + NADPH + H(+). The protein operates within amino-acid biosynthesis; L-proline biosynthesis; L-glutamate 5-semialdehyde from L-glutamate: step 2/2. Functionally, catalyzes the NADPH-dependent reduction of L-glutamate 5-phosphate into L-glutamate 5-semialdehyde and phosphate. The product spontaneously undergoes cyclization to form 1-pyrroline-5-carboxylate. The chain is Gamma-glutamyl phosphate reductase from Clostridium perfringens (strain 13 / Type A).